A 107-amino-acid chain; its full sequence is Basic phospholipase A2 sphenotoxin subunit B (107 aa).

Ca(2+) contacts are provided by tyrosine 27, glycine 29, and glycine 31. 5 cysteine pairs are disulfide-bonded: cysteine 28–cysteine 44, cysteine 43–cysteine 91, cysteine 50–cysteine 88, cysteine 57–cysteine 81, and cysteine 75–cysteine 86. Histidine 47 is an active-site residue. Aspartate 48 lines the Ca(2+) pocket. Aspartate 89 is a catalytic residue.

The protein belongs to the phospholipase A2 family. Group II subfamily. D49 sub-subfamily. Heterodimer of A and B chains; non-covalently linked. The acidic protein (B chain) has phospholipase A2 activity and the A chain weakly inhibits the B chain enzymatic activity but potentiates its lethal potency. As to expression, expressed by the venom gland.

The protein localises to the secreted. It catalyses the reaction a 1,2-diacyl-sn-glycero-3-phosphocholine + H2O = a 1-acyl-sn-glycero-3-phosphocholine + a fatty acid + H(+). Functionally, heterodimer A-B: Sphenotoxin is a potent neurotoxin that possesses phospholipase A2 (PLA2) activity. It consists of a non-covalent association of a basic PLA2 subunit B with a non-enzymatic subunit A. Monomer B: Not found in vivo. In vitro, potent neurotoxin that possesses phospholipase A2 (PLA2) activity and exerts a lethal action by blocking neuromuscular transmission. Induces paralysis of the hind legs and neuromuscular blockade in mouse phrenic nerve-diaphragm preparations. PLA2 catalyzes the calcium-dependent hydrolysis of the 2-acyl groups in 3-sn-phosphoglycerides. In Ophryacus sphenophrys (Broad-horned pitviper), this protein is Basic phospholipase A2 sphenotoxin subunit B.